The following is a 471-amino-acid chain: Ankyrin repeat and death domain-containing protein 1A (471 aa).

ANK repeat units lie at residues 19-48 (VGRVALHWAAGAGHEQAVRLLLEHEAAVDE), 52-81 (FGMNALLLSAWFGHLRILQILVNSGAKIHC), 85-114 (DGLTLLHCAAQKGHVPVLAFIMEDLEDVAL), 120-149 (LGRTAFHRAAEHGQLDALDFLVGSGCDHSV), 153-182 (EGNTALHLAAGRGHMAVLQRLVDIGLDLEE), 186-215 (EGLTALHAAAGGTHPHCVRLLLRAGSTVNA), 219-248 (KNLSCLHYAALSGSEDVSRVLIHAGGCTNV), 251-280 (HGASPLHLAVMHNFPALVQLLINSDSDLNA), 284-313 (RQQTPLHLAAEHAWQDIAEMLLIAGVDLNL), and 317-346 (QGKTALAVAARSNHVSLVDMIIKADRFYKW). A Death domain is found at 379–467 (SVLWRLASRH…DLAELAVASV (89 aa)).

The polypeptide is Ankyrin repeat and death domain-containing protein 1A (ANKDD1A) (Macaca fascicularis (Crab-eating macaque)).